Here is a 140-residue protein sequence, read N- to C-terminus: Large ribosomal subunit protein uL14 (140 aa).

The protein belongs to the universal ribosomal protein uL14 family. Part of the 50S ribosomal subunit. Forms a cluster with proteins L3 and L24e, part of which may contact the 16S rRNA in 2 intersubunit bridges.

In terms of biological role, binds to 23S rRNA. Forms part of two intersubunit bridges in the 70S ribosome. The protein is Large ribosomal subunit protein uL14 of Staphylothermus marinus (strain ATCC 43588 / DSM 3639 / JCM 9404 / F1).